Here is a 132-residue protein sequence, read N- to C-terminus: Small ribosomal subunit protein uS8 (132 aa).

Belongs to the universal ribosomal protein uS8 family. Part of the 30S ribosomal subunit. Contacts proteins S5 and S12.

One of the primary rRNA binding proteins, it binds directly to 16S rRNA central domain where it helps coordinate assembly of the platform of the 30S subunit. The polypeptide is Small ribosomal subunit protein uS8 (Streptococcus thermophilus (strain CNRZ 1066)).